The primary structure comprises 506 residues: Cytochrome P450 6a2 (506 aa).

Cys-451 contributes to the heme binding site.

The protein belongs to the cytochrome P450 family. Requires heme as cofactor.

It is found in the endoplasmic reticulum membrane. The protein resides in the microsome membrane. In terms of biological role, is involved in the breakdown of synthetic insecticides and may be involved in the metabolism of insect hormones. The protein is Cytochrome P450 6a2 (Cyp6a2) of Drosophila melanogaster (Fruit fly).